Reading from the N-terminus, the 380-residue chain is Alcohol dehydrogenase 3 (380 aa).

Positions 48, 50, 70, 100, 103, 106, 114, and 178 each coordinate Zn(2+). An alcohol is bound by residues Thr50 and His70. NAD(+) is bound at residue Thr50. NAD(+)-binding positions include 203-208 (GLGAVG), Asp227, Arg232, Thr273, Val296, 296-298 (VGV), Phe323, and Arg373.

It belongs to the zinc-containing alcohol dehydrogenase family. As to quaternary structure, homodimer. Homotetramer. It depends on Zn(2+) as a cofactor.

Its subcellular location is the cytoplasm. It catalyses the reaction a primary alcohol + NAD(+) = an aldehyde + NADH + H(+). The catalysed reaction is a secondary alcohol + NAD(+) = a ketone + NADH + H(+). The chain is Alcohol dehydrogenase 3 (ADH3) from Solanum tuberosum (Potato).